A 365-amino-acid polypeptide reads, in one-letter code: Holliday junction branch migration complex subunit RuvB (365 aa).

Residues 1-191 (MSPELGGGYD…FGFTAHMDFY (191 aa)) are large ATPase domain (RuvB-L). ATP contacts are provided by residues Leu-30, Arg-31, Gly-72, Lys-75, Thr-76, Ser-77, 138–140 (EDF), Arg-181, Tyr-191, and Arg-228. Position 76 (Thr-76) interacts with Mg(2+). The interval 192–262 (EPAELKQILM…IAHAALAVYD (71 aa)) is small ATPAse domain (RuvB-S). Positions 265-365 (QLGLDRLDRS…QASLFDPEDP (101 aa)) are head domain (RuvB-H). DNA contacts are provided by Arg-320 and Arg-325.

The protein belongs to the RuvB family. In terms of assembly, homohexamer. Forms an RuvA(8)-RuvB(12)-Holliday junction (HJ) complex. HJ DNA is sandwiched between 2 RuvA tetramers; dsDNA enters through RuvA and exits via RuvB. An RuvB hexamer assembles on each DNA strand where it exits the tetramer. Each RuvB hexamer is contacted by two RuvA subunits (via domain III) on 2 adjacent RuvB subunits; this complex drives branch migration. In the full resolvosome a probable DNA-RuvA(4)-RuvB(12)-RuvC(2) complex forms which resolves the HJ.

It is found in the cytoplasm. It carries out the reaction ATP + H2O = ADP + phosphate + H(+). Its function is as follows. The RuvA-RuvB-RuvC complex processes Holliday junction (HJ) DNA during genetic recombination and DNA repair, while the RuvA-RuvB complex plays an important role in the rescue of blocked DNA replication forks via replication fork reversal (RFR). RuvA specifically binds to HJ cruciform DNA, conferring on it an open structure. The RuvB hexamer acts as an ATP-dependent pump, pulling dsDNA into and through the RuvAB complex. RuvB forms 2 homohexamers on either side of HJ DNA bound by 1 or 2 RuvA tetramers; 4 subunits per hexamer contact DNA at a time. Coordinated motions by a converter formed by DNA-disengaged RuvB subunits stimulates ATP hydrolysis and nucleotide exchange. Immobilization of the converter enables RuvB to convert the ATP-contained energy into a lever motion, pulling 2 nucleotides of DNA out of the RuvA tetramer per ATP hydrolyzed, thus driving DNA branch migration. The RuvB motors rotate together with the DNA substrate, which together with the progressing nucleotide cycle form the mechanistic basis for DNA recombination by continuous HJ branch migration. Branch migration allows RuvC to scan DNA until it finds its consensus sequence, where it cleaves and resolves cruciform DNA. The polypeptide is Holliday junction branch migration complex subunit RuvB (Rhodococcus opacus (strain B4)).